We begin with the raw amino-acid sequence, 579 residues long: Arginine--tRNA ligase (579 aa).

Positions 136 to 146 (ANPTGPLHIGH) match the 'HIGH' region motif.

Belongs to the class-I aminoacyl-tRNA synthetase family. In terms of assembly, monomer.

The protein localises to the cytoplasm. The catalysed reaction is tRNA(Arg) + L-arginine + ATP = L-arginyl-tRNA(Arg) + AMP + diphosphate. The protein is Arginine--tRNA ligase of Anaplasma marginale (strain St. Maries).